A 664-amino-acid chain; its full sequence is Protein cueball (664 aa).

The N-terminal stretch at 1-21 (MRNLGIAVTFAVLLVIGYVTA) is a signal peptide. Residues 22-552 (LEWDAVVTTD…VTYCKNSFNR (531 aa)) are Extracellular-facing. 3 N-linked (GlcNAc...) asparagine glycosylation sites follow: Asn-40, Asn-140, and Asn-188. LDL-receptor class B repeat units lie at residues 115-157 (RKLY…ENHD), 168-211 (RHLY…DHYN), and 212-257 (NRIY…NSQY). EGF-like domains follow at residues 367–399 (EIPI…FEGE), 402–438 (DRNI…ARCE), and 473–510 (EEYT…KRCE). Cystine bridges form between Cys-371–Cys-380, Cys-375–Cys-390, Cys-406–Cys-416, Cys-410–Cys-426, Cys-428–Cys-437, Cys-477–Cys-487, Cys-481–Cys-498, and Cys-500–Cys-509. Asn-431 carries an N-linked (GlcNAc...) asparagine glycan. Asn-491 carries an N-linked (GlcNAc...) asparagine glycan. A glycan (N-linked (GlcNAc...) asparagine) is linked at Asn-551. The chain crosses the membrane as a helical span at residues 553–573 (TVVYVSLAFTASLVTLVTILC). Over 574 to 664 (TVRRMYERNR…KLPSCVAEKN (91 aa)) the chain is Cytoplasmic.

The protein belongs to the cueball family.

The protein localises to the cell membrane. Has a role in spermatogenesis and oogenesis. This Aedes aegypti (Yellowfever mosquito) protein is Protein cueball.